The primary structure comprises 120 residues: Spermidine export protein MdtJ (120 aa).

4 consecutive transmembrane segments (helical) span residues 1–21, 31–51, 54–74, and 81–101; these read MFYW…TLSM, AGYI…SFAV, IALG…ITVF, and EVLS…IVLI.

This sequence belongs to the drug/metabolite transporter (DMT) superfamily. Small multidrug resistance (SMR) (TC 2.A.7.1) family. MdtJ subfamily. Forms a complex with MdtI.

It is found in the cell inner membrane. Its function is as follows. Catalyzes the excretion of spermidine. This chain is Spermidine export protein MdtJ, found in Salmonella arizonae (strain ATCC BAA-731 / CDC346-86 / RSK2980).